A 398-amino-acid chain; its full sequence is Na(+)/H(+) antiporter NhaA (398 aa).

The next 11 helical transmembrane spans lie at 21–41 (LGGY…NSPL), 66–86 (VLHW…GLEI), 101–121 (IVLP…VYLL), 132–152 (GWAI…ALLG), 161–181 (IFLT…IAVF), 184–204 (AELN…LCVL), 216–236 (LLVG…ATLA), 274–294 (LLIV…GMGI), 305–325 (IALG…WLAI), 343–363 (GVAL…ALAF), and 374–394 (IGVL…LRVL).

This sequence belongs to the NhaA Na(+)/H(+) (TC 2.A.33) antiporter family.

The protein resides in the cell inner membrane. The catalysed reaction is Na(+)(in) + 2 H(+)(out) = Na(+)(out) + 2 H(+)(in). Functionally, na(+)/H(+) antiporter that extrudes sodium in exchange for external protons. This Bordetella bronchiseptica (strain ATCC BAA-588 / NCTC 13252 / RB50) (Alcaligenes bronchisepticus) protein is Na(+)/H(+) antiporter NhaA.